The primary structure comprises 239 residues: MADS-box transcription factor 34 (239 aa).

The region spanning 1–61 (MGRGKVVLQR…GRLYQFSSSS (61 aa)) is the MADS-box domain. Positions 88 to 178 (MQNNYQEYVN…KRKLDEIDVE (91 aa)) constitute a K-box domain. The interval 179–208 (AAPPQPPWNGNCSNGHGGGGGVFSSEPPQP) is disordered.

As to expression, highly expressed in leaves and at low levels in roots and spikelets (rice flower).

The protein resides in the nucleus. Probable transcription factor. The sequence is that of MADS-box transcription factor 34 (MADS34) from Oryza sativa subsp. japonica (Rice).